A 485-amino-acid chain; its full sequence is Probable WRKY transcription factor 10 (485 aa).

2 disordered regions span residues 43–62 (IFPQ…QRSG) and 215–293 (ISIE…SKTQ). The span at 216–264 (SIEDSESEDGNKDDDDEDFQYEDEDEDQYDQDQDVDEDEEEEKDEDNVA) shows a compositional bias: acidic residues. Positions 301–366 (SDEDNPNDGY…YDGIHNHPSP (66 aa)) form a DNA-binding region, WRKY. Zn(2+)-binding residues include C332, C337, H361, and H363. Residues 358-417 (DGIHNHPSPPARRSNSSSRNRSAGATIPQNQNDRTSRLGRAPPTPTPPTPPPSSYTPEEM) form a disordered region. Low complexity predominate over residues 368–380 (ARRSNSSSRNRSA). Residues 399-411 (PPTPTPPTPPPSS) are compositionally biased toward pro residues.

The protein belongs to the WRKY group I family. In terms of assembly, interacts with IKU1. Expressed in male gametophytes (pollen) and in the endosperm of fertilized ovules.

The protein resides in the nucleus. Transcription factor. Interacts specifically with the W box (5'-(T)TGAC[CT]-3'), a frequently occurring elicitor-responsive cis-acting element. Modulates seed size by negatively regulating the cellularization of syncytial endosperm. In Arabidopsis thaliana (Mouse-ear cress), this protein is Probable WRKY transcription factor 10 (WRKY10).